Reading from the N-terminus, the 179-residue chain is CMT1A duplicated region transcript 4 protein homolog (179 aa).

The segment covering 1–15 (MISRPESSLSGLESS) has biased composition (low complexity). The interval 1-20 (MISRPESSLSGLESSQEVQK) is disordered.

The polypeptide is CMT1A duplicated region transcript 4 protein homolog (Cdrt4) (Mus musculus (Mouse)).